The primary structure comprises 492 residues: Bifunctional protein GlmU (492 aa).

The interval 1–241 (MTFRGDTAVL…NALVAGVNNR (241 aa)) is pyrophosphorylase. Residues 12–15 (LAAG), K26, Q83, 88–89 (GT), 112–114 (SGD), G151, E166, N181, and N239 each bind UDP-N-acetyl-alpha-D-glucosamine. D114 provides a ligand contact to Mg(2+). N239 contacts Mg(2+). The segment at 242 to 262 (VQLAELSAELNRRIVATHQVA) is linker. The segment at 263–492 (GVTIIDPATT…KQSQQKSEPD (230 aa)) is N-acetyltransferase. UDP-N-acetyl-alpha-D-glucosamine-binding residues include R344 and K362. H374 functions as the Proton acceptor in the catalytic mechanism. UDP-N-acetyl-alpha-D-glucosamine is bound by residues Y377 and N388. Acetyl-CoA-binding positions include A391, 397–398 (NY), S416, and A434. The interval 461–492 (VQRKRPGSAAAQAAEKASTRTGKQSQQKSEPD) is disordered. Residues 479–492 (TRTGKQSQQKSEPD) show a composition bias toward polar residues.

The protein in the N-terminal section; belongs to the N-acetylglucosamine-1-phosphate uridyltransferase family. In the C-terminal section; belongs to the transferase hexapeptide repeat family. As to quaternary structure, homotrimer. Mg(2+) is required as a cofactor.

It localises to the cytoplasm. It carries out the reaction alpha-D-glucosamine 1-phosphate + acetyl-CoA = N-acetyl-alpha-D-glucosamine 1-phosphate + CoA + H(+). It catalyses the reaction N-acetyl-alpha-D-glucosamine 1-phosphate + UTP + H(+) = UDP-N-acetyl-alpha-D-glucosamine + diphosphate. The protein operates within nucleotide-sugar biosynthesis; UDP-N-acetyl-alpha-D-glucosamine biosynthesis; N-acetyl-alpha-D-glucosamine 1-phosphate from alpha-D-glucosamine 6-phosphate (route II): step 2/2. It participates in nucleotide-sugar biosynthesis; UDP-N-acetyl-alpha-D-glucosamine biosynthesis; UDP-N-acetyl-alpha-D-glucosamine from N-acetyl-alpha-D-glucosamine 1-phosphate: step 1/1. It functions in the pathway bacterial outer membrane biogenesis; LPS lipid A biosynthesis. Its function is as follows. Catalyzes the last two sequential reactions in the de novo biosynthetic pathway for UDP-N-acetylglucosamine (UDP-GlcNAc). The C-terminal domain catalyzes the transfer of acetyl group from acetyl coenzyme A to glucosamine-1-phosphate (GlcN-1-P) to produce N-acetylglucosamine-1-phosphate (GlcNAc-1-P), which is converted into UDP-GlcNAc by the transfer of uridine 5-monophosphate (from uridine 5-triphosphate), a reaction catalyzed by the N-terminal domain. This Mycobacterium leprae (strain Br4923) protein is Bifunctional protein GlmU.